The primary structure comprises 308 residues: HTH-type transcriptional regulator YtlI (308 aa).

Residues Met1–Thr57 enclose the HTH lysR-type domain. The segment at residues Phe18 to Lys37 is a DNA-binding region (H-T-H motif).

Belongs to the LysR transcriptional regulatory family.

Its function is as follows. Positively regulates the expression of ytmI operon in response to the availability of sulfur sources. The chain is HTH-type transcriptional regulator YtlI (ytlI) from Bacillus subtilis (strain 168).